The chain runs to 158 residues: Large ribosomal subunit protein mL50 (158 aa).

It belongs to the mitochondrion-specific ribosomal protein mL50 family. Component of the mitochondrial ribosome large subunit (39S) which comprises a 16S rRNA and about 50 distinct proteins.

It is found in the mitochondrion. This chain is Large ribosomal subunit protein mL50 (MRPL50), found in Pongo abelii (Sumatran orangutan).